The primary structure comprises 1175 residues: uncharacterized protein (1175 aa).

586–593 (GPAGTGKT) provides a ligand contact to ATP.

This is an uncharacterized protein from Methanocaldococcus jannaschii (strain ATCC 43067 / DSM 2661 / JAL-1 / JCM 10045 / NBRC 100440) (Methanococcus jannaschii).